A 140-amino-acid chain; its full sequence is Small ribosomal subunit protein uS12 (140 aa).

Positions 33–55 (KEQTNVSSPQKRGVCTRVGTMTP) are disordered.

This sequence belongs to the universal ribosomal protein uS12 family. In terms of assembly, part of the 30S ribosomal subunit. Contacts proteins S8 and S17. May interact with IF1 in the 30S initiation complex.

With S4 and S5 plays an important role in translational accuracy. In terms of biological role, interacts with and stabilizes bases of the 16S rRNA that are involved in tRNA selection in the A site and with the mRNA backbone. Located at the interface of the 30S and 50S subunits, it traverses the body of the 30S subunit contacting proteins on the other side and probably holding the rRNA structure together. The combined cluster of proteins S8, S12 and S17 appears to hold together the shoulder and platform of the 30S subunit. The chain is Small ribosomal subunit protein uS12 from Geobacillus kaustophilus (strain HTA426).